Here is a 332-residue protein sequence, read N- to C-terminus: NADH-quinone oxidoreductase subunit H (332 aa).

A run of 9 helical transmembrane segments spans residues 16-36 (VFFGLGALLLLVVLGFVTYAI), 87-107 (YVLAPIIAFTPSFMVLAALPF), 116-136 (IGVGLLYYIAVSGLTTIGVVT), 164-184 (LVMSALGVVLLAGSMNLVDIV), 190-210 (VWFIFAQPLAFLIFFIAAVAE), 231-251 (VEYSGFRWAFFMLAEYVYLFA), 253-273 (AALITILFLGGWHPVAFLGWI), 277-297 (VWFALKFCAIVYVLIWFRATF), and 312-332 (VLLPLSLVNIVLTAVIKSLFF).

The protein belongs to the complex I subunit 1 family. As to quaternary structure, NDH-1 is composed of 14 different subunits. Subunits NuoA, H, J, K, L, M, N constitute the membrane sector of the complex.

It localises to the cell membrane. It catalyses the reaction a quinone + NADH + 5 H(+)(in) = a quinol + NAD(+) + 4 H(+)(out). Functionally, NDH-1 shuttles electrons from NADH, via FMN and iron-sulfur (Fe-S) centers, to quinones in the respiratory chain. The immediate electron acceptor for the enzyme in this species is believed to be ubiquinone. Couples the redox reaction to proton translocation (for every two electrons transferred, four hydrogen ions are translocated across the cytoplasmic membrane), and thus conserves the redox energy in a proton gradient. This subunit may bind ubiquinone. This is NADH-quinone oxidoreductase subunit H from Geobacillus thermodenitrificans (strain NG80-2).